The following is a 234-amino-acid chain: CD-NTase-associated protein 13 (234 aa).

The helical transmembrane segment at 20 to 42 threads the bilayer; it reads TIMKNVIANVSTAITLALMILWI.

The protein in the C-terminal section; belongs to the bacterial STING family.

It is found in the cell inner membrane. In terms of biological role, effector protein of a CBASS antivirus system. CBASS (cyclic oligonucleotide-based antiphage signaling system) provides immunity against bacteriophage. The CD-NTase protein synthesizes cyclic nucleotides in response to infection; these serve as specific second messenger signals. The signals activate a diverse range of effectors, leading to bacterial cell death and thus abortive phage infection. A type I-D CBASS(GG) system. Binds c-di-GMP (synthesized by the cognate CdnE encoded upstream in the same operon) and about 10-fold less well 3'3'-cGAMP, but not c-di-AMP, 2'3'-cGAMP or cUMP-AMP (tested with a protein without the transmembrane region). The effector protein for this CBASS system, its activity is stimulated by c-di-GMP and leads to cell death. This Roseivirga ehrenbergii (strain DSM 102268 / JCM 13514 / KCTC 12282 / NCIMB 14502 / KMM 6017) protein is CD-NTase-associated protein 13.